The primary structure comprises 506 residues: Maturase K (506 aa).

It belongs to the intron maturase 2 family. MatK subfamily.

The protein localises to the plastid. It is found in the chloroplast. In terms of biological role, usually encoded in the trnK tRNA gene intron. Probably assists in splicing its own and other chloroplast group II introns. In Jurinea cyanoides, this protein is Maturase K.